Here is a 260-residue protein sequence, read N- to C-terminus: UPF0246 protein Tola_0968 (260 aa).

The protein belongs to the UPF0246 family.

The chain is UPF0246 protein Tola_0968 from Tolumonas auensis (strain DSM 9187 / NBRC 110442 / TA 4).